The sequence spans 772 residues: Chondroitin sulfate glucuronyltransferase (772 aa).

The Cytoplasmic segment spans residues 1–6; the sequence is MRLSSL. Residues 7-29 traverse the membrane as a helical; Signal-anchor for type II membrane protein segment; it reads LALLRPALPLILGLSLGCSLSLL. Residues 30–772 are Lumenal-facing; it reads RVSWIQGEGE…LFEQEQANST (743 aa). Asn-121 and Asn-342 each carry an N-linked (GlcNAc...) asparagine glycan. The disordered stretch occupies residues 629 to 662; sequence ALSPQRSPPGPPGAGPDPPSPPGADPSRGAPIGG. Residues 634-652 show a composition bias toward pro residues; the sequence is RSPPGPPGAGPDPPSPPGA.

It belongs to the chondroitin N-acetylgalactosaminyltransferase family. Ubiquitous. Highly expressed in placenta, small intestine and pancreas.

Its subcellular location is the golgi apparatus. It is found in the golgi stack membrane. The catalysed reaction is 3-O-(beta-D-GalNAc-(1-&gt;4)-beta-D-GlcA-(1-&gt;3)-beta-D-Gal-(1-&gt;3)-beta-D-Gal-(1-&gt;4)-beta-D-Xyl)-L-seryl-[protein] + UDP-alpha-D-glucuronate = 3-O-(beta-D-GlcA-(1-&gt;3)-beta-D-GalNAc-(1-&gt;4)-beta-D-GlcA-(1-&gt;3)-beta-D-Gal-(1-&gt;3)-beta-D-Gal-(1-&gt;4)-beta-D-Xyl)-L-seryl-[protein] + UDP + H(+). It catalyses the reaction 3-O-{[beta-D-GalNAc-(1-&gt;4)-beta-D-GlcA-(1-&gt;3)](n)-beta-D-GalNAc-(1-&gt;4)-beta-D-GlcA-(1-&gt;3)-beta-D-Gal-(1-&gt;3)-beta-D-Gal-(1-&gt;4)-beta-D-Xyl}-L-seryl-[protein] + UDP-alpha-D-glucuronate = 3-O-{beta-D-GlcA-(1-&gt;3)-[beta-D-GalNAc-(1-&gt;4)-beta-D-GlcA-(1-&gt;3)](n)-beta-D-GalNAc-(1-&gt;4)-beta-D-GlcA-(1-&gt;3)-beta-D-Gal-(1-&gt;3)-beta-D-Gal-(1-&gt;4)-beta-D-Xyl}-L-seryl-[protein] + UDP + H(+). Transfers glucuronic acid (GlcUA) from UDP-GlcUA to N-acetylgalactosamine residues on the non-reducing end of the elongating chondroitin polymer. Has no N-acetylgalactosaminyltransferase activity. The sequence is that of Chondroitin sulfate glucuronyltransferase (CHPF2) from Homo sapiens (Human).